Consider the following 153-residue polypeptide: 6,7-dimethyl-8-ribityllumazine synthase (153 aa).

Residues Phe-22, 56–58 (AFE), and 80–82 (TVI) contribute to the 5-amino-6-(D-ribitylamino)uracil site. 85-86 (ST) serves as a coordination point for (2S)-2-hydroxy-3-oxobutyl phosphate. His-88 (proton donor) is an active-site residue. Phe-113 is a binding site for 5-amino-6-(D-ribitylamino)uracil. Residue Arg-127 coordinates (2S)-2-hydroxy-3-oxobutyl phosphate.

It belongs to the DMRL synthase family. As to quaternary structure, forms an icosahedral capsid composed of 60 subunits, arranged as a dodecamer of pentamers.

It carries out the reaction (2S)-2-hydroxy-3-oxobutyl phosphate + 5-amino-6-(D-ribitylamino)uracil = 6,7-dimethyl-8-(1-D-ribityl)lumazine + phosphate + 2 H2O + H(+). The protein operates within cofactor biosynthesis; riboflavin biosynthesis; riboflavin from 2-hydroxy-3-oxobutyl phosphate and 5-amino-6-(D-ribitylamino)uracil: step 1/2. Functionally, catalyzes the formation of 6,7-dimethyl-8-ribityllumazine by condensation of 5-amino-6-(D-ribitylamino)uracil with 3,4-dihydroxy-2-butanone 4-phosphate. This is the penultimate step in the biosynthesis of riboflavin. This Actinobacillus pleuropneumoniae (Haemophilus pleuropneumoniae) protein is 6,7-dimethyl-8-ribityllumazine synthase.